The sequence spans 297 residues: MNKRQSQLKFGNEGISLAVPKQSLQECSYMSNLITDRESTFLSYFVPSKDPKMLPVYRFMFQESADLKHCNHKMQAWRFPNEIEAFNDDGEEYSGQKLLNVLRKEDVYGMVVCVRWYGGQLLGPVRFQHITNTAKQSIDKYKSVLEEERKKQLLRTETGLLRQSSSRSSSLLDQRIRQITAKDKTVNLLRKTLNRPLLHEVDYHGKSLEILDMLLQSRNSMISSLRSELQEKNQKDKKKEVNKLEEKMTNAKEPNVNVPSMKASSAISVETPETIESEASVDHKEASKIIKDVEKEE.

Residues leucine 225–asparagine 255 adopt a coiled-coil conformation. Composition is skewed to basic and acidic residues over residues glutamate 228 to asparagine 250 and serine 280 to glutamate 297. The interval glutamate 228–glutamate 297 is disordered.

The protein belongs to the IMPACT family.

This is IMPACT family member C14C8.09c from Schizosaccharomyces pombe (strain 972 / ATCC 24843) (Fission yeast).